A 173-amino-acid polypeptide reads, in one-letter code: Glutamyl-tRNA(Gln) amidotransferase subunit C, mitochondrial (173 aa).

It belongs to the GatC family. In terms of assembly, subunit of the heterotrimeric GatCAB amidotransferase (AdT) complex, composed of A, B and C subunits.

It is found in the mitochondrion. The enzyme catalyses L-glutamyl-tRNA(Gln) + L-glutamine + ATP + H2O = L-glutaminyl-tRNA(Gln) + L-glutamate + ADP + phosphate + H(+). In terms of biological role, allows the formation of correctly charged Gln-tRNA(Gln) through the transamidation of misacylated Glu-tRNA(Gln) in the mitochondria. The reaction takes place in the presence of glutamine and ATP through an activated gamma-phospho-Glu-tRNA(Gln). This is Glutamyl-tRNA(Gln) amidotransferase subunit C, mitochondrial from Drosophila persimilis (Fruit fly).